Reading from the N-terminus, the 353-residue chain is Probable tRNA pseudouridine synthase B (353 aa).

Aspartate 45 functions as the Nucleophile in the catalytic mechanism. A PUA domain is found at 211-287 (YPKIVAKKSA…DHIFVEAKHG (77 aa)). A disordered region spans residues 292 to 353 (VRDREKDVQR…TGVHRRPGSH (62 aa)). Residues 309 to 328 (NIRDAAHGPDSRTGRGRKET) show a composition bias toward basic and acidic residues. The span at 336–353 (RVRKLQNKTGVHRRPGSH) shows a compositional bias: basic residues.

Belongs to the pseudouridine synthase TruB family. Type 2 subfamily.

It catalyses the reaction uridine(55) in tRNA = pseudouridine(55) in tRNA. Its function is as follows. Could be responsible for synthesis of pseudouridine from uracil-55 in the psi GC loop of transfer RNAs. This Thermoplasma volcanium (strain ATCC 51530 / DSM 4299 / JCM 9571 / NBRC 15438 / GSS1) protein is Probable tRNA pseudouridine synthase B.